The sequence spans 176 residues: uncharacterized protein (176 aa).

Polar residues predominate over residues 1–12; it reads MRLPYSSSKPIP. 2 disordered regions span residues 1-88 and 109-132; these read MRLP…PQQQ and VNNSPIKTPSKKHRSSSKKSPSSS. Low complexity predominate over residues 13–24; the sequence is TNNNNNNNNTNN. Positions 37–46 are enriched in polar residues; the sequence is SYYQTQENNK. Residues 47 to 88 are compositionally biased toward low complexity; that stretch reads PQQSQQHPLLQHQQQQQQQQQQQQQQQQQQQQQQQQQQPQQQ.

This is an uncharacterized protein from Dictyostelium discoideum (Social amoeba).